A 363-amino-acid chain; its full sequence is Transcription factor PIF6 (363 aa).

Disordered regions lie at residues 154 to 204 (SEGS…RNDI) and 340 to 363 (IPNPNSLSNLDGATLHKKSRKTNR). The segment covering 178 to 188 (RTRKALVKRKR) has biased composition (basic residues). Residues 188–237 (RNAEAYNSPERNQRNDINKKMRTLQNLLPNSHKDDNESMLDEAINYMTNL) form the bHLH domain. Polar residues predominate over residues 340–350 (IPNPNSLSNLD). Positions 354–363 (LHKKSRKTNR) are enriched in basic residues.

As to quaternary structure, homodimer. Interacts with APRR1/TOC1. Binds to RGL2 and RGA. Associates to PTAC12/HMR/PAP5 which acts as a transcriptional coactivator. Mainly expressed in fruits and flowers and, to a lower extent, in leaves, stems, seedlings and roots.

The protein resides in the nucleus. In terms of biological role, transcription factor. The polypeptide is Transcription factor PIF6 (Arabidopsis thaliana (Mouse-ear cress)).